We begin with the raw amino-acid sequence, 430 residues long: 3-phosphoshikimate 1-carboxyvinyltransferase (430 aa).

3-phosphoshikimate is bound by residues Lys-20, Ser-21, and Arg-25. Lys-20 is a phosphoenolpyruvate binding site. Gly-92 and Arg-120 together coordinate phosphoenolpyruvate. Ser-166, Gln-168, Asp-312, and Lys-339 together coordinate 3-phosphoshikimate. Residue Gln-168 participates in phosphoenolpyruvate binding. The Proton acceptor role is filled by Asp-312. Phosphoenolpyruvate contacts are provided by Arg-343 and Arg-387.

The protein belongs to the EPSP synthase family. Monomer.

Its subcellular location is the cytoplasm. It carries out the reaction 3-phosphoshikimate + phosphoenolpyruvate = 5-O-(1-carboxyvinyl)-3-phosphoshikimate + phosphate. Its pathway is metabolic intermediate biosynthesis; chorismate biosynthesis; chorismate from D-erythrose 4-phosphate and phosphoenolpyruvate: step 6/7. Functionally, catalyzes the transfer of the enolpyruvyl moiety of phosphoenolpyruvate (PEP) to the 5-hydroxyl of shikimate-3-phosphate (S3P) to produce enolpyruvyl shikimate-3-phosphate and inorganic phosphate. The chain is 3-phosphoshikimate 1-carboxyvinyltransferase from Lactococcus lactis subsp. cremoris (strain SK11).